The primary structure comprises 343 residues: Probable dual-specificity RNA methyltransferase RlmN (343 aa).

Catalysis depends on glutamate 90, which acts as the Proton acceptor. One can recognise a Radical SAM core domain in the interval 96 to 325 (HEGYATACIS…AEIRYEKGAD (230 aa)). Cysteine 103 and cysteine 330 are joined by a disulfide. Residues cysteine 110, cysteine 114, and cysteine 117 each coordinate [4Fe-4S] cluster. Residues 157-158 (GE), serine 189, 212-214 (SLH), and asparagine 288 contribute to the S-adenosyl-L-methionine site. Catalysis depends on cysteine 330, which acts as the S-methylcysteine intermediate.

It belongs to the radical SAM superfamily. RlmN family. The cofactor is [4Fe-4S] cluster.

The protein resides in the cytoplasm. It carries out the reaction adenosine(2503) in 23S rRNA + 2 reduced [2Fe-2S]-[ferredoxin] + 2 S-adenosyl-L-methionine = 2-methyladenosine(2503) in 23S rRNA + 5'-deoxyadenosine + L-methionine + 2 oxidized [2Fe-2S]-[ferredoxin] + S-adenosyl-L-homocysteine. It catalyses the reaction adenosine(37) in tRNA + 2 reduced [2Fe-2S]-[ferredoxin] + 2 S-adenosyl-L-methionine = 2-methyladenosine(37) in tRNA + 5'-deoxyadenosine + L-methionine + 2 oxidized [2Fe-2S]-[ferredoxin] + S-adenosyl-L-homocysteine. Specifically methylates position 2 of adenine 2503 in 23S rRNA and position 2 of adenine 37 in tRNAs. The protein is Probable dual-specificity RNA methyltransferase RlmN of Pseudothermotoga lettingae (strain ATCC BAA-301 / DSM 14385 / NBRC 107922 / TMO) (Thermotoga lettingae).